The chain runs to 254 residues: Ribosomal RNA large subunit methyltransferase E (254 aa).

The interval 1–28 (MTTPPRGPDGRPLKVRVKKSRGRTTSSQ) is disordered. The span at 13 to 22 (LKVRVKKSRG) shows a compositional bias: basic residues. S-adenosyl-L-methionine is bound by residues Gly80, Trp82, Asp103, Asp119, and Asp143. The Proton acceptor role is filled by Lys183. The interval 231-254 (DRAETDDAGTDGTGTAEAQAPRDQ) is disordered.

This sequence belongs to the class I-like SAM-binding methyltransferase superfamily. RNA methyltransferase RlmE family.

The protein resides in the cytoplasm. It carries out the reaction uridine(2552) in 23S rRNA + S-adenosyl-L-methionine = 2'-O-methyluridine(2552) in 23S rRNA + S-adenosyl-L-homocysteine + H(+). Functionally, specifically methylates the uridine in position 2552 of 23S rRNA at the 2'-O position of the ribose in the fully assembled 50S ribosomal subunit. This is Ribosomal RNA large subunit methyltransferase E from Xanthobacter autotrophicus (strain ATCC BAA-1158 / Py2).